The following is a 158-amino-acid chain: Cyclic pyranopterin monophosphate synthase (158 aa).

Substrate is bound by residues 75–77 (LCH) and 113–114 (ME). Residue Asp128 is part of the active site.

The protein belongs to the MoaC family. Homohexamer; trimer of dimers.

It carries out the reaction (8S)-3',8-cyclo-7,8-dihydroguanosine 5'-triphosphate = cyclic pyranopterin phosphate + diphosphate. It participates in cofactor biosynthesis; molybdopterin biosynthesis. Functionally, catalyzes the conversion of (8S)-3',8-cyclo-7,8-dihydroguanosine 5'-triphosphate to cyclic pyranopterin monophosphate (cPMP). The polypeptide is Cyclic pyranopterin monophosphate synthase (Histophilus somni (strain 2336) (Haemophilus somnus)).